A 380-amino-acid polypeptide reads, in one-letter code: MKKIILLGATGSIGTQTLAIIRENPEKFQIVALSFGRNMERGRAIIKEFKPKMVAVWHTRDRVILEAEFPNVKFFNGLEGLREVATYLDGDVLLNAVMGSVGLLPTLDAIEAGKAIAIANKETLVTAGHLVMRAAKEKNISLLPVDSEHSAILQALNGENTERIEKLVLTASGGSFRDKTREQLSEVTVKEALKHPNWNMGNKLTIDSATMFNKGLEVMEAHWLFGVDYDDIEVVIQRESIIHSMVQFVDGSFIAQLGTPDMRMPIQYALTYPDRLYIPYEKEFRITDFSALHFEKVDYERFPALKLAYNAGKIGGTMPTVLNAANEIAVAGFLNGQVAFYNIEALVENAMNRHTSISDPDLDTILQVDQETRAYVKTLL.

Residues Thr-10, Gly-11, Ser-12, Ile-13, Gly-36, Arg-37, Asn-38, and Asn-120 each coordinate NADPH. Lys-121 contacts 1-deoxy-D-xylulose 5-phosphate. Residue Glu-122 participates in NADPH binding. Asp-146 serves as a coordination point for Mn(2+). Residues Ser-147, Glu-148, Ser-172, and His-195 each contribute to the 1-deoxy-D-xylulose 5-phosphate site. Mn(2+) is bound at residue Glu-148. NADPH is bound at residue Gly-201. Ser-208, Asn-213, Lys-214, and Glu-217 together coordinate 1-deoxy-D-xylulose 5-phosphate. Residue Glu-217 coordinates Mn(2+).

This sequence belongs to the DXR family. Mg(2+) is required as a cofactor. The cofactor is Mn(2+).

The enzyme catalyses 2-C-methyl-D-erythritol 4-phosphate + NADP(+) = 1-deoxy-D-xylulose 5-phosphate + NADPH + H(+). The protein operates within isoprenoid biosynthesis; isopentenyl diphosphate biosynthesis via DXP pathway; isopentenyl diphosphate from 1-deoxy-D-xylulose 5-phosphate: step 1/6. Functionally, catalyzes the NADPH-dependent rearrangement and reduction of 1-deoxy-D-xylulose-5-phosphate (DXP) to 2-C-methyl-D-erythritol 4-phosphate (MEP). This is 1-deoxy-D-xylulose 5-phosphate reductoisomerase from Listeria monocytogenes serotype 4b (strain F2365).